Consider the following 158-residue polypeptide: Ribosome-binding factor A (158 aa).

Residues Thr130–Glu158 are disordered. Residues Glu145–Glu158 are compositionally biased toward acidic residues.

This sequence belongs to the RbfA family. In terms of assembly, monomer. Binds 30S ribosomal subunits, but not 50S ribosomal subunits or 70S ribosomes.

The protein localises to the cytoplasm. Functionally, one of several proteins that assist in the late maturation steps of the functional core of the 30S ribosomal subunit. Associates with free 30S ribosomal subunits (but not with 30S subunits that are part of 70S ribosomes or polysomes). Required for efficient processing of 16S rRNA. May interact with the 5'-terminal helix region of 16S rRNA. In Bifidobacterium longum subsp. infantis (strain ATCC 15697 / DSM 20088 / JCM 1222 / NCTC 11817 / S12), this protein is Ribosome-binding factor A.